A 443-amino-acid chain; its full sequence is Ribulose bisphosphate carboxylase large chain (443 aa).

Lysine 3 bears the N6,N6,N6-trimethyllysine mark. The substrate site is built by asparagine 112 and threonine 162. The active-site Proton acceptor is lysine 164. A substrate-binding site is contributed by lysine 166. Mg(2+) is bound by residues lysine 190, aspartate 192, and glutamate 193. Lysine 190 is modified (N6-carboxylysine). Histidine 283 acts as the Proton acceptor in catalysis. Positions 284, 316, and 368 each coordinate substrate.

This sequence belongs to the RuBisCO large chain family. Type I subfamily. In terms of assembly, heterohexadecamer of 8 large chains and 8 small chains; disulfide-linked. The disulfide link is formed within the large subunit homodimers. Mg(2+) serves as cofactor. The disulfide bond which can form in the large chain dimeric partners within the hexadecamer appears to be associated with oxidative stress and protein turnover.

It localises to the plastid. The protein resides in the chloroplast. The catalysed reaction is 2 (2R)-3-phosphoglycerate + 2 H(+) = D-ribulose 1,5-bisphosphate + CO2 + H2O. The enzyme catalyses D-ribulose 1,5-bisphosphate + O2 = 2-phosphoglycolate + (2R)-3-phosphoglycerate + 2 H(+). In terms of biological role, ruBisCO catalyzes two reactions: the carboxylation of D-ribulose 1,5-bisphosphate, the primary event in carbon dioxide fixation, as well as the oxidative fragmentation of the pentose substrate in the photorespiration process. Both reactions occur simultaneously and in competition at the same active site. This Iris germanica (Bearded iris) protein is Ribulose bisphosphate carboxylase large chain.